Consider the following 218-residue polypeptide: Ribose-5-phosphate isomerase A (218 aa).

Residues 28 to 31 (SGST), 81 to 84 (DGAD), and 94 to 97 (KGKG) each bind substrate. The active-site Proton acceptor is the glutamate 103. A substrate-binding site is contributed by lysine 121.

The protein belongs to the ribose 5-phosphate isomerase family. As to quaternary structure, homodimer.

The enzyme catalyses aldehydo-D-ribose 5-phosphate = D-ribulose 5-phosphate. It functions in the pathway carbohydrate degradation; pentose phosphate pathway; D-ribose 5-phosphate from D-ribulose 5-phosphate (non-oxidative stage): step 1/1. Functionally, catalyzes the reversible conversion of ribose-5-phosphate to ribulose 5-phosphate. The sequence is that of Ribose-5-phosphate isomerase A from Wigglesworthia glossinidia brevipalpis.